The following is a 252-amino-acid chain: Ubiquinone biosynthesis O-methyltransferase (252 aa).

Residues R45, G76, D97, and M141 each contribute to the S-adenosyl-L-methionine site.

The protein belongs to the methyltransferase superfamily. UbiG/COQ3 family.

It carries out the reaction a 3-demethylubiquinol + S-adenosyl-L-methionine = a ubiquinol + S-adenosyl-L-homocysteine + H(+). The enzyme catalyses a 3-(all-trans-polyprenyl)benzene-1,2-diol + S-adenosyl-L-methionine = a 2-methoxy-6-(all-trans-polyprenyl)phenol + S-adenosyl-L-homocysteine + H(+). The protein operates within cofactor biosynthesis; ubiquinone biosynthesis. Functionally, O-methyltransferase that catalyzes the 2 O-methylation steps in the ubiquinone biosynthetic pathway. The polypeptide is Ubiquinone biosynthesis O-methyltransferase (Caulobacter sp. (strain K31)).